Reading from the N-terminus, the 573-residue chain is ESX-1 secretion system protein EccA1 (573 aa).

334-341 (GPPGTGKT) contributes to the ATP binding site.

It belongs to the CbxX/CfxQ family. In terms of assembly, part of the ESX-1 / type VII secretion system (T7SS), which is composed of cytosolic and membrane components.

It is found in the cytoplasm. Its function is as follows. Part of the ESX-1 / type VII specialized secretion system (T7SS), which exports several proteins including EsxA and EsxB. EccA1 exhibits ATPase activity and may provide energy for the export of ESX-1 substrates. The polypeptide is ESX-1 secretion system protein EccA1 (Mycobacterium leprae (strain TN)).